The primary structure comprises 169 residues: Ribosome maturation factor RimM (169 aa).

In terms of domain architecture, PRC barrel spans 97–169 (EDEVYFKDLI…KIVVDWEYDY (73 aa)).

Belongs to the RimM family. In terms of assembly, binds ribosomal protein uS19.

Its subcellular location is the cytoplasm. An accessory protein needed during the final step in the assembly of 30S ribosomal subunit, possibly for assembly of the head region. Essential for efficient processing of 16S rRNA. May be needed both before and after RbfA during the maturation of 16S rRNA. It has affinity for free ribosomal 30S subunits but not for 70S ribosomes. The chain is Ribosome maturation factor RimM from Francisella tularensis subsp. holarctica (strain FTNF002-00 / FTA).